Reading from the N-terminus, the 301-residue chain is Protein FdhE homolog (301 aa).

It belongs to the FdhE family.

The protein localises to the cytoplasm. In terms of biological role, necessary for formate dehydrogenase activity. This chain is Protein FdhE homolog, found in Shewanella baltica (strain OS185).